The following is a 146-amino-acid chain: Transcriptional regulator MraZ (146 aa).

SpoVT-AbrB domains follow at residues Ser-4–Ser-46 and Thr-75–Lys-118.

It belongs to the MraZ family. In terms of assembly, forms oligomers.

The protein localises to the cytoplasm. Its subcellular location is the nucleoid. This Mycoplasma mobile (strain ATCC 43663 / 163K / NCTC 11711) (Mesomycoplasma mobile) protein is Transcriptional regulator MraZ.